Consider the following 123-residue polypeptide: UPF0102 protein Mflv_4140 (123 aa).

It belongs to the UPF0102 family.

The protein is UPF0102 protein Mflv_4140 of Mycolicibacterium gilvum (strain PYR-GCK) (Mycobacterium gilvum (strain PYR-GCK)).